Here is a 59-residue protein sequence, read N- to C-terminus: Antibacterial peptide enbocin (59 aa).

The first 20 residues, 1–20, serve as a signal peptide directing secretion; it reads MNFTRIIFFLFVVVFATASG. K21 is a propeptide. S58 carries the serine amide modification.

The protein belongs to the cecropin family.

It is found in the secreted. Its function is as follows. Has antibacterial activity against Gram-positive and Gram-negative bacteria. This chain is Antibacterial peptide enbocin, found in Bombyx mori (Silk moth).